Reading from the N-terminus, the 278-residue chain is Ribosomal RNA small subunit methyltransferase A (278 aa).

S-adenosyl-L-methionine contacts are provided by asparagine 18, leucine 20, glycine 45, glutamate 66, aspartate 89, and asparagine 110.

The protein belongs to the class I-like SAM-binding methyltransferase superfamily. rRNA adenine N(6)-methyltransferase family. RsmA subfamily.

The protein localises to the cytoplasm. The catalysed reaction is adenosine(1518)/adenosine(1519) in 16S rRNA + 4 S-adenosyl-L-methionine = N(6)-dimethyladenosine(1518)/N(6)-dimethyladenosine(1519) in 16S rRNA + 4 S-adenosyl-L-homocysteine + 4 H(+). Functionally, specifically dimethylates two adjacent adenosines (A1518 and A1519) in the loop of a conserved hairpin near the 3'-end of 16S rRNA in the 30S particle. May play a critical role in biogenesis of 30S subunits. This chain is Ribosomal RNA small subunit methyltransferase A, found in Cupriavidus metallidurans (strain ATCC 43123 / DSM 2839 / NBRC 102507 / CH34) (Ralstonia metallidurans).